We begin with the raw amino-acid sequence, 513 residues long: Calcium-dependent protein kinase 2 (513 aa).

The Protein kinase domain maps to tyrosine 65–leucine 323. Residues leucine 71 to threonine 79 and lysine 94 each bind ATP. The active-site Proton acceptor is aspartate 189. Residues alanine 329 to isoleucine 359 are autoinhibitory domain. 4 consecutive EF-hand domains span residues glutamate 366–lysine 401, leucine 402–leucine 437, glutamate 438–glycine 473, and isoleucine 478–glutamine 508. Aspartate 379, aspartate 381, serine 383, threonine 385, glutamate 390, aspartate 415, aspartate 417, asparagine 419, serine 421, glutamate 426, aspartate 451, aspartate 453, serine 455, glutamate 462, aspartate 486, aspartate 488, aspartate 490, arginine 492, and glutamate 497 together coordinate Ca(2+).

Belongs to the protein kinase superfamily. Ser/Thr protein kinase family. CDPK subfamily.

The catalysed reaction is L-seryl-[protein] + ATP = O-phospho-L-seryl-[protein] + ADP + H(+). It carries out the reaction L-threonyl-[protein] + ATP = O-phospho-L-threonyl-[protein] + ADP + H(+). Its activity is regulated as follows. Activated by calcium. Autophosphorylation may play an important role in the regulation of the kinase activity. May play a role in signal transduction pathways that involve calcium as a second messenger. The polypeptide is Calcium-dependent protein kinase 2 (CPK2) (Zea mays (Maize)).